The chain runs to 557 residues: Glucose-6-phosphate isomerase (557 aa).

The active-site Proton donor is the glutamate 361. Catalysis depends on residues histidine 392 and lysine 520.

This sequence belongs to the GPI family.

The protein localises to the cytoplasm. It catalyses the reaction alpha-D-glucose 6-phosphate = beta-D-fructose 6-phosphate. The protein operates within carbohydrate biosynthesis; gluconeogenesis. It functions in the pathway carbohydrate degradation; glycolysis; D-glyceraldehyde 3-phosphate and glycerone phosphate from D-glucose: step 2/4. Its function is as follows. Catalyzes the reversible isomerization of glucose-6-phosphate to fructose-6-phosphate. This chain is Glucose-6-phosphate isomerase, found in Acinetobacter baylyi (strain ATCC 33305 / BD413 / ADP1).